Consider the following 295-residue polypeptide: uncharacterized protein (295 aa).

The 99-residue stretch at 8 to 106 (QKTINWIESH…HMPPGAYRTF (99 aa)) folds into the HTH araC/xylS-type domain. Residues 25-46 (EDIVNVSSFSKFHFHRIFQKEV) constitute a DNA-binding region (H-T-H motif).

In terms of biological role, probable transcriptional regulator. This is an uncharacterized protein from Bacillus subtilis (strain 168).